Consider the following 240-residue polypeptide: Uridylate kinase (240 aa).

14–17 (KLSG) provides a ligand contact to ATP. Gly-56 provides a ligand contact to UMP. Residues Gly-57 and Arg-61 each coordinate ATP. UMP-binding positions include Asp-76 and 137–144 (TGNPFFTT). ATP-binding residues include Thr-164, Tyr-170, and Asp-173.

Belongs to the UMP kinase family. Homohexamer.

The protein resides in the cytoplasm. The enzyme catalyses UMP + ATP = UDP + ADP. It participates in pyrimidine metabolism; CTP biosynthesis via de novo pathway; UDP from UMP (UMPK route): step 1/1. Its activity is regulated as follows. Inhibited by UTP. Catalyzes the reversible phosphorylation of UMP to UDP. The sequence is that of Uridylate kinase from Albidiferax ferrireducens (strain ATCC BAA-621 / DSM 15236 / T118) (Rhodoferax ferrireducens).